We begin with the raw amino-acid sequence, 684 residues long: Gabija protein GajB (684 aa).

The UvrD-like helicase ATP-binding domain occupies 14 to 351 (EQKSINAIFN…IEVINKIRND (338 aa)). ATP is bound at residue 35 to 42 (SGAGAGKT).

The protein belongs to the helicase family. As to quaternary structure, homodimer. Interacts with GajA; 2 GajB dimers dock at opposite sides of the GajA complex to form a 4:4 GajA-GajB assembly (GajAB). GajAB interacts with Bacillus phage Phi3T Gad1 protein; this interaction forms a 4:4:8 GajAB-Gad1 complex and leads to GajAB inhibition.

Its function is as follows. Component of antiviral defense system Gabija type II, composed of GajA and GajB. Expression of Gabija type II in B.subtilis (strain BEST7003) confers resistance to phages phi105, and SpBeta. May be a helicase or contribute to GajA activation. This chain is Gabija protein GajB, found in Bacillus cereus (strain HuB5-5).